The sequence spans 110 residues: MGVKMLLIFGLLILAMVAKSVNATYPLTKSCINGQGCIGEDDELESLMDSETNRRQLARGRRYIGYDALKKNNVPCSRRGRSYYDCKKRRRNNPYRRGCSAITHCYRYAR.

An N-terminal signal peptide occupies residues 1 to 23; sequence MGVKMLLIFGLLILAMVAKSVNA. Positions 24-58 are cleaved as a propeptide — removed in mature form; the sequence is TYPLTKSCINGQGCIGEDDELESLMDSETNRRQLA. Cystine bridges form between Cys76/Cys86 and Cys99/Cys105.

The protein belongs to the plant rapid alkalinization factor (RALF) family. In terms of processing, proteolytically cleaved, probably by S1P, a subtilisin-like serine protease (subtilase).

It localises to the secreted. Functionally, cell signaling peptide that may regulate plant stress, growth, and development. Mediates a rapid alkalinization of extracellular space by mediating a transient increase in the cytoplasmic Ca(2+) concentration leading to a calcium-dependent signaling events through a cell surface receptor and a concomitant activation of some intracellular mitogen-activated protein kinases. This Arabidopsis thaliana (Mouse-ear cress) protein is Protein RALF-like 4 (RALFL4).